We begin with the raw amino-acid sequence, 1018 residues long: Probable inorganic carbon transporter subunit DabA 2 (1018 aa).

Residues Cys-489, Asp-491, His-674, and Cys-689 each contribute to the Zn(2+) site.

Belongs to the inorganic carbon transporter (TC 9.A.2) DabA family. As to quaternary structure, forms a complex with DabB. The cofactor is Zn(2+).

It localises to the cell inner membrane. Its function is as follows. Part of an energy-coupled inorganic carbon pump. The polypeptide is Probable inorganic carbon transporter subunit DabA 2 (Sorangium cellulosum (strain So ce56) (Polyangium cellulosum (strain So ce56))).